The primary structure comprises 379 residues: Alpha-humulene synthase eupE (379 aa).

It belongs to the terpene synthase family. Alpha-humulene synthase eupE subfamily. It depends on Mg(2+) as a cofactor.

It catalyses the reaction (2E,6E)-farnesyl diphosphate = alpha-humulene + diphosphate. It functions in the pathway secondary metabolite biosynthesis; terpenoid biosynthesis. Alpha-humulene synthase; part of the gene cluster that mediates the biosynthesis of eupenifeldin, a bistropolone meroterpenoid that acts as an antitumor agent. The first step of eupenifeldin biosynthesis is the biosynthesis of 3-methylorcinaldehyde performed by the non-reducing polyketide synthase eupA. Oxidative dearomatization of 3-methylorcinaldehyde likely catalyzed by the FAD-dependent monooxygenase eupB is followed by oxidative ring expansion by the 2-oxoglutarate-dependent dioxygenase eupC to provide the first tropolone metabolite, tropolone stipitaldehyde. In parallel, generation of sesquiterpene alpha-humulene from farnesylpyrophosphate (FPP) is catalyzed by the terpene cyclase eupE. The cytochrome P450 monooxygenase eupD then hydroxylates humulene to humulenol. The putative Diels-Alderase eupF probably catalyzes the formation of the tropolone-humulene skeleton by linking humulenol and the polyketide moiety. The short-chain dehydrogenase/reductase eupG and the flavin-dependent monooxygenase eupH are also essential for eupenifeldin biosynthesis and are likely the additional decorating enzymes of the tropolone-humulene skeleton to produce final eupenifeldin or derivatives. The chain is Alpha-humulene synthase eupE from Phoma sp.